The primary structure comprises 349 residues: Heme A synthase (349 aa).

5 helical membrane passes run 15 to 35 (AVQV…VVGG), 101 to 121 (LLGR…ALTG), 132 to 152 (FGLF…VASG), 162 to 182 (YRLA…VAVA), and 203 to 223 (VLVG…GLDA). Residue H265 coordinates heme. 3 helical membrane-spanning segments follow: residues 268 to 288 (IAYL…RLGG), 296 to 316 (LVFA…VHMV), and 317 to 337 (PLDL…AAMI). Heme is bound at residue H324.

This sequence belongs to the COX15/CtaA family. Type 2 subfamily. As to quaternary structure, interacts with CtaB. Heme b serves as cofactor.

It localises to the cell membrane. The enzyme catalyses Fe(II)-heme o + 2 A + H2O = Fe(II)-heme a + 2 AH2. It participates in porphyrin-containing compound metabolism; heme A biosynthesis; heme A from heme O: step 1/1. In terms of biological role, catalyzes the conversion of heme O to heme A by two successive hydroxylations of the methyl group at C8. The first hydroxylation forms heme I, the second hydroxylation results in an unstable dihydroxymethyl group, which spontaneously dehydrates, resulting in the formyl group of heme A. The protein is Heme A synthase of Azorhizobium caulinodans (strain ATCC 43989 / DSM 5975 / JCM 20966 / LMG 6465 / NBRC 14845 / NCIMB 13405 / ORS 571).